The following is a 295-amino-acid chain: Tyrosine recombinase XerD (295 aa).

Residues 1–85 (MNTIIEEYLN…TIRSFHQFAL (85 aa)) form the Core-binding (CB) domain. Positions 106-289 (KLPDVLEIDE…SKSQIRKMYT (184 aa)) constitute a Tyr recombinase domain. Active-site residues include Arg-146, Lys-170, His-241, Arg-244, and His-267. Catalysis depends on Tyr-276, which acts as the O-(3'-phospho-DNA)-tyrosine intermediate.

Belongs to the 'phage' integrase family. XerD subfamily. As to quaternary structure, forms a cyclic heterotetrameric complex composed of two molecules of XerC and two molecules of XerD.

It localises to the cytoplasm. Site-specific tyrosine recombinase, which acts by catalyzing the cutting and rejoining of the recombining DNA molecules. The XerC-XerD complex is essential to convert dimers of the bacterial chromosome into monomers to permit their segregation at cell division. It also contributes to the segregational stability of plasmids. The polypeptide is Tyrosine recombinase XerD (Staphylococcus epidermidis (strain ATCC 12228 / FDA PCI 1200)).